The primary structure comprises 242 residues: Polycomb group RING finger protein 3 (242 aa).

Residues 17–56 (CRLCSGYLIDATTVTECLHTFCRSCLVKYLEENNTCPTCR) form an RING-type zinc finger. Residues 115–149 (AKQHLDSHRNGETKADDSSNKEAAEEKPEEDNDYH) form a disordered region. The segment covering 117–140 (QHLDSHRNGETKADDSSNKEAAEE) has biased composition (basic and acidic residues). The tract at residues 132 to 242 (SSNKEAAEEK…LHYRPKMDLL (111 aa)) is interaction with BCORL1.

As to quaternary structure, component of a PRC1-like complex that contains PCGF3, RNF2 and RYBP. Interacts with CBX6, CBX7 and CBX8. Interacts with BCORL1.

Its subcellular location is the nucleus. The protein resides in the nucleoplasm. Its function is as follows. Component of a Polycomb group (PcG) multiprotein PRC1-like complex, a complex class required to maintain the transcriptionally repressive state of many genes, including Hox genes, throughout development. PcG PRC1 complex acts via chromatin remodeling and modification of histones; it mediates monoubiquitination of histone H2A 'Lys-119', rendering chromatin heritably changed in its expressibility. Within the PRC1-like complex, regulates RNF2 ubiquitin ligase activity. Plays a redundant role with PCGF5 as part of a PRC1-like complex that mediates monoubiquitination of histone H2A 'Lys-119' on the X chromosome and is required for normal silencing of one copy of the X chromosome in XX females. In Homo sapiens (Human), this protein is Polycomb group RING finger protein 3 (PCGF3).